The sequence spans 644 residues: Large subunit GTPase 1 homolog (644 aa).

A disordered region spans residues 1–31 (MGRRRAPGGGSLGRVLIRQQTQRSRSHRHTD). Residues S93 and S97 each carry the phosphoserine modification. In terms of domain architecture, CP-type G spans 164 to 430 (WRQLWRVIER…LCDCPGLVMP (267 aa)). Position 212–215 (212–215 (NKAD)) interacts with GTP. The segment at 253 to 345 (KEEVDSVAGD…KNAENQQVNN (93 aa)) is disordered. Over residues 302–326 (CQEDEEEDWQTCSEEDSVPEEEEGC) the composition is skewed to acidic residues. Residues 379–386 (GYPNVGKS) and 423–426 (DCPG) contribute to the GTP site. Positions 618 to 644 (VPGKPWKKHGNRNKKEKSRRLYKHLDV) are disordered. A compositionally biased stretch (basic residues) spans 622–644 (PWKKHGNRNKKEKSRRLYKHLDV).

Belongs to the TRAFAC class YlqF/YawG GTPase family. LSG1 subfamily.

The protein resides in the cytoplasm. Its subcellular location is the endoplasmic reticulum. The protein localises to the nucleus. It is found in the cajal body. The enzyme catalyses GTP + H2O = GDP + phosphate + H(+). Functions as a GTPase. May act by mediating the release of NMD3 from the 60S ribosomal subunit after export into the cytoplasm during the 60S ribosomal subunit maturation. This is Large subunit GTPase 1 homolog from Mus musculus (Mouse).